The chain runs to 346 residues: Beta-hexosaminidase (346 aa).

Residues aspartate 62, arginine 70, arginine 134, and 164 to 165 contribute to the substrate site; that span reads KH. Histidine 177 (proton donor/acceptor) is an active-site residue. Aspartate 249 serves as the catalytic Nucleophile.

It belongs to the glycosyl hydrolase 3 family. NagZ subfamily.

The protein resides in the cytoplasm. The enzyme catalyses Hydrolysis of terminal non-reducing N-acetyl-D-hexosamine residues in N-acetyl-beta-D-hexosaminides.. Its pathway is cell wall biogenesis; peptidoglycan recycling. Functionally, plays a role in peptidoglycan recycling by cleaving the terminal beta-1,4-linked N-acetylglucosamine (GlcNAc) from peptide-linked peptidoglycan fragments, giving rise to free GlcNAc, anhydro-N-acetylmuramic acid and anhydro-N-acetylmuramic acid-linked peptides. In Actinobacillus succinogenes (strain ATCC 55618 / DSM 22257 / CCUG 43843 / 130Z), this protein is Beta-hexosaminidase.